We begin with the raw amino-acid sequence, 442 residues long: GTPase Der (442 aa).

2 consecutive EngA-type G domains span residues 4–169 (PIVA…PENN) and 178–353 (IKIA…EQAT). GTP-binding positions include 10–17 (GRPNVGKS), 57–61 (DTGGL), 121–124 (NKIE), 184–191 (GRPNVGKS), 231–235 (DTAGM), and 296–299 (NKWD). One can recognise a KH-like domain in the interval 354–438 (RRISTSVLNE…PMRFFIRERE (85 aa)).

It belongs to the TRAFAC class TrmE-Era-EngA-EngB-Septin-like GTPase superfamily. EngA (Der) GTPase family. As to quaternary structure, associates with the 50S ribosomal subunit.

In terms of biological role, GTPase that plays an essential role in the late steps of ribosome biogenesis. This is GTPase Der from Heliobacterium modesticaldum (strain ATCC 51547 / Ice1).